The chain runs to 392 residues: Xyloside xylosyltransferase 1 (392 aa).

Over 1–19 the chain is Cytoplasmic; it reads MGLLRGGAACARAMARLGA. Residues 20–42 form a helical; Signal-anchor for type II membrane protein membrane-spanning segment; the sequence is LRSHYCALLLAAALAVCAFYYLG. Residues 43–392 are Lumenal-facing; that stretch reads SGRETFSSAT…GNCNTPIPED (350 aa). 103–105 is a UDP-alpha-D-xylose binding site; that stretch reads MFT. Asp-225 lines the Mn(2+) pocket. Position 226 (Leu-226) interacts with UDP-alpha-D-xylose. Asp-227 provides a ligand contact to Mn(2+). The interval 262 to 265 is interaction with target proteins; that stretch reads HTFW. Residues Ser-289, Leu-327, and Gln-330 each contribute to the UDP-alpha-D-xylose site. Positions 330 and 359 each coordinate a glycoprotein. Disulfide bonds link Cys-349–Cys-374 and Cys-356–Cys-385. His-382 contacts Mn(2+). Asn-384 contributes to the a glycoprotein binding site.

This sequence belongs to the glycosyltransferase 8 family. As to quaternary structure, homodimer. Dimer formation may be essential for the retention in endoplasmic reticulum. Mg(2+) is required as a cofactor. Mn(2+) serves as cofactor.

The protein localises to the endoplasmic reticulum membrane. It carries out the reaction 3-O-[alpha-D-xylosyl-(1-&gt;3)-beta-D-glucosyl]-L-seryl-[EGF-like domain protein] + UDP-alpha-D-xylose = 3-O-[alpha-D-xylosyl-(1-&gt;3)-alpha-D-xylosyl-(1-&gt;3)-beta-D-glucosyl]-L-seryl-[EGF-like domain protein] + UDP + H(+). Alpha-1,3-xylosyltransferase, which elongates the O-linked xylose-glucose disaccharide attached to EGF-like repeats in the extracellular domain of target proteins by catalyzing the addition of the second xylose. Known targets include Notch proteins and coagulation factors, such as F9. The polypeptide is Xyloside xylosyltransferase 1 (Xxylt1) (Mus musculus (Mouse)).